We begin with the raw amino-acid sequence, 99 residues long: DNA-directed RNA polymerase subunit omega (99 aa).

This sequence belongs to the RNA polymerase subunit omega family. In terms of assembly, the RNAP catalytic core consists of 2 alpha, 1 beta, 1 beta' and 1 omega subunit. When a sigma factor is associated with the core the holoenzyme is formed, which can initiate transcription.

It carries out the reaction RNA(n) + a ribonucleoside 5'-triphosphate = RNA(n+1) + diphosphate. Promotes RNA polymerase assembly. Latches the N- and C-terminal regions of the beta' subunit thereby facilitating its interaction with the beta and alpha subunits. The sequence is that of DNA-directed RNA polymerase subunit omega (rpoZ) from Deinococcus radiodurans (strain ATCC 13939 / DSM 20539 / JCM 16871 / CCUG 27074 / LMG 4051 / NBRC 15346 / NCIMB 9279 / VKM B-1422 / R1).